The chain runs to 1127 residues: Carbamoyl phosphate synthase large chain (1127 aa).

The interval 1-402 is carboxyphosphate synthetic domain; it reads MPKRTDIKSV…SLGKAMRSID (402 aa). Arg129, Arg169, Gly175, Gly176, Glu208, Ile210, Glu215, Gly241, Val242, His243, Gln285, and Glu299 together coordinate ATP. The 196-residue stretch at 133 to 328 folds into the ATP-grasp 1 domain; the sequence is KKVVDEAGAE…IAKIATKLAL (196 aa). Mg(2+)-binding residues include Gln285, Glu299, and Asn301. Positions 285, 299, and 301 each coordinate Mn(2+). The oligomerization domain stretch occupies residues 403 to 551; sequence KRHMGFNWDG…YYYSCYADET (149 aa). The interval 552–962 is carbamoyl phosphate synthetic domain; it reads ELRPREREAV…AFAKSQLAAY (411 aa). One can recognise an ATP-grasp 2 domain in the interval 681 to 881; the sequence is GEVLKKAEMN…LAKAAARIMA (201 aa). 10 residues coordinate ATP: Arg717, Lys765, Leu767, Glu772, Gly797, Val798, His799, Ser800, Gln840, and Glu852. Positions 840, 852, and 854 each coordinate Mg(2+). Residues Gln840, Glu852, and Asn854 each coordinate Mn(2+). The segment at 963 to 1127 is allosteric domain; sequence DGGLPTHGNV…QLFELERREF (165 aa). The MGS-like domain occupies 964–1127; sequence GGLPTHGNVF…QLFELERREF (164 aa).

It belongs to the CarB family. Composed of two chains; the small (or glutamine) chain promotes the hydrolysis of glutamine to ammonia, which is used by the large (or ammonia) chain to synthesize carbamoyl phosphate. Tetramer of heterodimers (alpha,beta)4. It depends on Mg(2+) as a cofactor. Requires Mn(2+) as cofactor.

It carries out the reaction hydrogencarbonate + L-glutamine + 2 ATP + H2O = carbamoyl phosphate + L-glutamate + 2 ADP + phosphate + 2 H(+). The enzyme catalyses hydrogencarbonate + NH4(+) + 2 ATP = carbamoyl phosphate + 2 ADP + phosphate + 2 H(+). It participates in amino-acid biosynthesis; L-arginine biosynthesis; carbamoyl phosphate from bicarbonate: step 1/1. Its pathway is pyrimidine metabolism; UMP biosynthesis via de novo pathway; (S)-dihydroorotate from bicarbonate: step 1/3. Functionally, large subunit of the glutamine-dependent carbamoyl phosphate synthetase (CPSase). CPSase catalyzes the formation of carbamoyl phosphate from the ammonia moiety of glutamine, carbonate, and phosphate donated by ATP, constituting the first step of 2 biosynthetic pathways, one leading to arginine and/or urea and the other to pyrimidine nucleotides. The large subunit (synthetase) binds the substrates ammonia (free or transferred from glutamine from the small subunit), hydrogencarbonate and ATP and carries out an ATP-coupled ligase reaction, activating hydrogencarbonate by forming carboxy phosphate which reacts with ammonia to form carbamoyl phosphate. The protein is Carbamoyl phosphate synthase large chain of Bifidobacterium longum (strain DJO10A).